Reading from the N-terminus, the 291-residue chain is MKKVIAITGPTASGKTSLSIKIAKKFNLEIINCDSLQMYQKYDIGTAKITLEEAQGIKHHLLDFLAPGTNYSIYHFQKDARKKIEETPLPLFVGGSGLYLKSALFDYELTPKSLFLPPTSLPAIENMIDFIKQKDPQLIANLDLKNPRRILSAYQDLLEGTLRSQKNKKHNSLYSSLIFYLDIDRQILKKRVILRLEQMLKQGFIEEVNQIQTHFPNPNFNIIGYREIKALLEGKITLDQAKTLIIQKTMQYAKRQKTWFKNQIKPIILDALSPDLEKTTICLINDFLKTD.

An ATP-binding site is contributed by G9–T16. T11–T16 contributes to the substrate binding site. Residues D34 to Q37 are interaction with substrate tRNA.

This sequence belongs to the IPP transferase family. As to quaternary structure, monomer. The cofactor is Mg(2+).

The catalysed reaction is adenosine(37) in tRNA + dimethylallyl diphosphate = N(6)-dimethylallyladenosine(37) in tRNA + diphosphate. Functionally, catalyzes the transfer of a dimethylallyl group onto the adenine at position 37 in tRNAs that read codons beginning with uridine, leading to the formation of N6-(dimethylallyl)adenosine (i(6)A). This chain is tRNA dimethylallyltransferase, found in Onion yellows phytoplasma (strain OY-M).